Reading from the N-terminus, the 346-residue chain is Nicotinate-nucleotide--dimethylbenzimidazole phosphoribosyltransferase (346 aa).

Catalysis depends on Glu-312, which acts as the Proton acceptor.

The protein belongs to the CobT family.

It catalyses the reaction 5,6-dimethylbenzimidazole + nicotinate beta-D-ribonucleotide = alpha-ribazole 5'-phosphate + nicotinate + H(+). It participates in nucleoside biosynthesis; alpha-ribazole biosynthesis; alpha-ribazole from 5,6-dimethylbenzimidazole: step 1/2. Functionally, catalyzes the synthesis of alpha-ribazole-5'-phosphate from nicotinate mononucleotide (NAMN) and 5,6-dimethylbenzimidazole (DMB). The chain is Nicotinate-nucleotide--dimethylbenzimidazole phosphoribosyltransferase from Cupriavidus taiwanensis (strain DSM 17343 / BCRC 17206 / CCUG 44338 / CIP 107171 / LMG 19424 / R1) (Ralstonia taiwanensis (strain LMG 19424)).